A 354-amino-acid polypeptide reads, in one-letter code: Homer protein homolog 1 (354 aa).

Residues 1 to 110 enclose the WH1 domain; sequence MGEQPIFSTR…EKFQEFKEAA (110 aa). G2 carries the N-acetylglycine modification. Positions 114 to 173 are disordered; sequence KEKSQEKMELTSTPSQESAGGDLQSPLTPESINGTDDERTPDVTQNSEPRAEPTQNALPF. Composition is skewed to polar residues over residues 138–147 and 155–173; these read SPLTPESING and DVTQ…ALPF. Positions 181-352 form a coiled coil; it reads KHWEAELATL…LRDNLAKLLE (172 aa). The interval 290-354 is required for tetramerization; sequence KLQEVEIRNK…DNLAKLLECS (65 aa). S306 bears the Phosphoserine mark.

It belongs to the Homer family. Tetramer; this tetrameric structure is critical for forming the high-order complex with SHANK1, which in turn is necessary for the structural and functional integrity of dendritic spines. Interacts with GRM1, GRM5, ITPR1, DNM3, RYR1, RYR2 and SHANK3. Interacts with IFT57 and OPHN1. Isoform 1 encodes a coiled-coil structure that mediates homo- and heteromultimerization. Interacts with SHANK1; forms high-order polymerized complex with a mesh-like network structure, at least composed of SHANK1, HOMER1 and DLGAP1; the complex formation is SHANK1 multimerization dependent. Interacts with NFATC4. Interacts with DAGLA (via PPXXF motif); this interaction is required for the cell membrane localization of DAGLA. Interacts with SRGAP2.

It localises to the cytoplasm. It is found in the postsynaptic density. The protein localises to the synapse. The protein resides in the cell projection. Its subcellular location is the dendritic spine. Postsynaptic density scaffolding protein. Binds and cross-links cytoplasmic regions of GRM1, GRM5, ITPR1, DNM3, RYR1, RYR2, SHANK1 and SHANK3. By physically linking GRM1 and GRM5 with ER-associated ITPR1 receptors, it aids the coupling of surface receptors to intracellular calcium release. May also couple GRM1 to PI3 kinase through its interaction with AGAP2. Isoform 1 regulates the trafficking and surface expression of GRM5. Isoform 3 acts as a natural dominant negative, in dynamic competition with constitutively expressed isoform 1 to regulate synaptic metabotropic glutamate function. Isoform 3, may be involved in the structural changes that occur at synapses during long-lasting neuronal plasticity and development. Forms a high-order complex with SHANK1, which in turn is necessary for the structural and functional integrity of dendritic spines. Negatively regulates T cell activation by inhibiting the calcineurin-NFAT pathway. Acts by competing with calcineurin/PPP3CA for NFAT protein binding, hence preventing NFAT activation by PPP3CA. In Homo sapiens (Human), this protein is Homer protein homolog 1.